Here is a 255-residue protein sequence, read N- to C-terminus: NAD-dependent protein deacylase (255 aa).

A Deacetylase sirtuin-type domain is found at 1-253; sequence MEFSDELLAS…PLLLQALRRS (253 aa). 22–42 is a binding site for NAD(+); it reads GAGVSAESGIPTFRDALTGFW. Positions 67 and 70 each coordinate substrate. 101 to 104 provides a ligand contact to NAD(+); it reads QNVD. Histidine 119 functions as the Proton acceptor in the catalytic mechanism. 4 residues coordinate Zn(2+): cysteine 127, cysteine 130, cysteine 155, and cysteine 158. NAD(+) contacts are provided by residues 195–197, 221–223, and alanine 239; these read GTS and NPA.

Belongs to the sirtuin family. Class III subfamily. It depends on Zn(2+) as a cofactor.

It is found in the cytoplasm. The enzyme catalyses N(6)-acetyl-L-lysyl-[protein] + NAD(+) + H2O = 2''-O-acetyl-ADP-D-ribose + nicotinamide + L-lysyl-[protein]. The catalysed reaction is N(6)-succinyl-L-lysyl-[protein] + NAD(+) + H2O = 2''-O-succinyl-ADP-D-ribose + nicotinamide + L-lysyl-[protein]. Functionally, NAD-dependent lysine deacetylase and desuccinylase that specifically removes acetyl and succinyl groups on target proteins. Modulates the activities of several proteins which are inactive in their acylated form. The chain is NAD-dependent protein deacylase from Methylococcus capsulatus (strain ATCC 33009 / NCIMB 11132 / Bath).